Here is an 89-residue protein sequence, read N- to C-terminus: Mu-theraphotoxin-Phlo1a (89 aa).

An N-terminal signal peptide occupies residues 1 to 22 (MKVSVLITLAVLGVMFVWTSAA). The propeptide occupies 23–52 (EQEDHGSDRRDSPALLKNLLGEEVFQSEER). Cystine bridges form between C54–C68, C61–C73, and C67–C81. I87 bears the Isoleucine amide mark.

It belongs to the neurotoxin 10 (Hwtx-1) family. 39 (Jztx-34) subfamily. In terms of tissue distribution, expressed by the venom gland.

It is found in the secreted. Its function is as follows. Gating-modifier toxin that inhibits voltage-gated sodium channel Nav by shifting the threshold for channel activation to more positive potentials. This toxin moderately inhibits human Nav1.7/SCN9A (IC(50)=459 nM) and weakly inhibits hNav1.2/SCN2A and hNav1.5/SCN5A (&lt;20% inhibition at 1 uM peptide). Inhibition of Nav1.7 is voltage-dependent, with lower inhibition at more positive test pulses. This Phlogius sp. (Tarantula spider) protein is Mu-theraphotoxin-Phlo1a.